Consider the following 298-residue polypeptide: Probable endonuclease 4 (298 aa).

9 residues coordinate Zn(2+): His-69, His-111, Glu-146, Asp-180, His-183, His-215, Asp-228, His-230, and Glu-260.

This sequence belongs to the AP endonuclease 2 family. Zn(2+) is required as a cofactor.

It catalyses the reaction Endonucleolytic cleavage to 5'-phosphooligonucleotide end-products.. Endonuclease IV plays a role in DNA repair. It cleaves phosphodiester bonds at apurinic or apyrimidinic (AP) sites, generating a 3'-hydroxyl group and a 5'-terminal sugar phosphate. This is Probable endonuclease 4 from Bacillus cereus (strain AH187).